The sequence spans 145 residues: Protein phosphatase 1 regulatory subunit 14D (145 aa).

Positions 1 to 14 (MLSSSPASCTSPSP) are enriched in low complexity. Residues 1-59 (MLSSSPASCTSPSPDGENPCKKVHWASGRRRTSSTDSESKSHPDSSKIPRSRRPSRLTV) are disordered. An interaction with protein phosphatase 1 region spans residues 21–25 (KKVHW). The segment covering 21–32 (KKVHWASGRRRT) has biased composition (basic residues). The segment covering 37–47 (SESKSHPDSSK) has biased composition (basic and acidic residues). T58 bears the Phosphothreonine mark.

The protein belongs to the PP1 inhibitor family. Post-translationally, phosphorylated on several residues. As to expression, detected in colon, intestine, kidney and brain cortex.

The protein resides in the cytoplasm. Its function is as follows. Inhibitor of PPP1CA. Has inhibitory activity only when phosphorylated, creating a molecular switch for regulating the phosphorylation status of PPP1CA substrates and smooth muscle contraction. The polypeptide is Protein phosphatase 1 regulatory subunit 14D (PPP1R14D) (Homo sapiens (Human)).